Here is a 406-residue protein sequence, read N- to C-terminus: MRVLVVNCGSSSIKYQFLDMDTEQVLCKGLAERIGIPGSRIVHKKDDQKVVVEKPMKDHEDALKYVLELVVDEKVGGVKDLKEIDAVGHRVVHGGEKFSGSVLIDEEVMRALEEYSYLAPLHNPPNIMGIRAMMKLLPGVPNVAVFDTAFHSKMPAKAYLYAIPYEYYKKYKIRRYGFHGTSHRYVSKRTAEILGLDYHKSKIITVHLGNGASIAAVMNGHSIDTSMGFTPLEGLVMGTRSGDIDPSIVTFLMEKEGLTAEEVYTILNKKSGVLGLTDGFSSDMRDIEGKALEGDPVCRLALDIYEYRIAKYIGAYIAAMNGVDAIAFTAGVGENSPITRKEICENYLSYLGIKIDDEKNNVKGEERIITTPDSKVKVLLVPTNEELMIARDTKEIIEKGLKQLEY.

Residue Asn-7 coordinates Mg(2+). Lys-14 is a binding site for ATP. Arg-90 lines the substrate pocket. Asp-147 (proton donor/acceptor) is an active-site residue. ATP contacts are provided by residues 207–211, 283–285, and 331–335; these read HLGNG, DMR, and GVGEN. Glu-385 serves as a coordination point for Mg(2+).

This sequence belongs to the acetokinase family. As to quaternary structure, homodimer. Requires Mg(2+) as cofactor. The cofactor is Mn(2+).

Its subcellular location is the cytoplasm. The enzyme catalyses acetate + ATP = acetyl phosphate + ADP. It functions in the pathway metabolic intermediate biosynthesis; acetyl-CoA biosynthesis; acetyl-CoA from acetate: step 1/2. Catalyzes the formation of acetyl phosphate from acetate and ATP. Can also catalyze the reverse reaction. In Fervidobacterium nodosum (strain ATCC 35602 / DSM 5306 / Rt17-B1), this protein is Acetate kinase.